A 312-amino-acid chain; its full sequence is Non-structural protein 12A (312 aa).

A compositionally biased stretch (low complexity) spans 1–23 (MFKSGSGSLKRSGSISSVKSFSG). Disordered stretches follow at residues 1–37 (MFKSGSGSLKRSGSISSVKSFSGDSEKGLPPISRGSV), 62–99 (FVPEKTKSEGNLKDKSSVITGNFGSSGPINAHTNQNAD), and 111–161 (ESSK…GTGD). The span at 63 to 77 (VPEKTKSEGNLKDKS) shows a compositional bias: basic and acidic residues. The segment covering 78–98 (SVITGNFGSSGPINAHTNQNA) has biased composition (polar residues). Residues 122–134 (DARHTATDSRLSQ) are compositionally biased toward basic and acidic residues.

It belongs to the phytoreovirus non-structural protein Pns12A family.

The protein localises to the host cytoplasm. Functionally, constituent of viral factories. Binds to ssRNA and dsRNA. The chain is Non-structural protein 12A from Alopecurus aequalis (Barnyard grass).